The sequence spans 116 residues: Mitochondrial import inner membrane translocase subunit PAM16 like 2 (116 aa).

The N-terminal 27 residues, 1–27 (MAGRLLANLIVMGSGIIGRAVFQAYRQ), are a transit peptide targeting the mitochondrion. The interval 57–106 (EARQILGVTEKTSWEEILQKYDKLFENNAKAGSFYLQSKVHRAKECLEVV) is J-like.

Belongs to the TIM16/PAM16 family. As to expression, expressed constitutively and ubiquitously, except in root tips, at low levels.

The protein localises to the mitochondrion inner membrane. It is found in the cytoplasm. Functionally, regulates ATP-dependent protein translocation into the mitochondrial matrix. Involved in the uptake of thaxtomin, a phytotoxin produced by Streptomyces bacteria, that causes dramatic cell swelling, reduced seedling growth, and inhibition of cellulose synthesis. Modulates polar auxin transport. Involved in importing a negative regulator of plant immunity into mitochondria, thus protecting plants from over-accumulation of reactive oxygen species (ROS) and preventing autoimmunity. Confers sensitivity to virulent pathogens such as the oomycete H.arabidopsidis Noco2 and the bacteria P.syringae pv. maculicola ES4326. The sequence is that of Mitochondrial import inner membrane translocase subunit PAM16 like 2 from Arabidopsis thaliana (Mouse-ear cress).